A 102-amino-acid polypeptide reads, in one-letter code: Small ribosomal subunit protein uS10 (102 aa).

Belongs to the universal ribosomal protein uS10 family. Part of the 30S ribosomal subunit.

Functionally, involved in the binding of tRNA to the ribosomes. This chain is Small ribosomal subunit protein uS10, found in Lactiplantibacillus plantarum (strain ATCC BAA-793 / NCIMB 8826 / WCFS1) (Lactobacillus plantarum).